The primary structure comprises 160 residues: Transcriptional repressor NrdR (160 aa).

A zinc finger spans residues 3-34; sequence CPSCQNTDSRVLESRAADGGRSVRRRRECLNC. An ATP-cone domain is found at 49 to 139; that stretch reads ITVIKRNGNR…VYRQFRGIDD (91 aa).

The protein belongs to the NrdR family. Zn(2+) serves as cofactor.

Negatively regulates transcription of bacterial ribonucleotide reductase nrd genes and operons by binding to NrdR-boxes. This Synechococcus sp. (strain CC9605) protein is Transcriptional repressor NrdR.